The chain runs to 307 residues: Mitogen-activated protein kinase kinase 7 (307 aa).

A Protein kinase domain is found at 45-303 (VEKLHVLGRG…ASQLLGHPFL (259 aa)). ATP-binding positions include 51–59 (LGRGSSGIV) and K74. The Proton acceptor role is filled by D165. S193 and S199 each carry phosphoserine. T203 is modified (phosphothreonine).

This sequence belongs to the protein kinase superfamily. STE Ser/Thr protein kinase family. MAP kinase kinase subfamily. In terms of assembly, interacts with MPK15. Post-translationally, phosphorylation at Ser-193 and Ser-199 by MAP kinase kinase kinases positively regulates kinase activity. In terms of tissue distribution, expressed in all tissues, with a relatively higher level in leaves and lower level in roots and flowers.

It catalyses the reaction L-seryl-[protein] + ATP = O-phospho-L-seryl-[protein] + ADP + H(+). The enzyme catalyses L-threonyl-[protein] + ATP = O-phospho-L-threonyl-[protein] + ADP + H(+). The catalysed reaction is L-tyrosyl-[protein] + ATP = O-phospho-L-tyrosyl-[protein] + ADP + H(+). Its function is as follows. May function as a negative regulator of polar auxin transport. Positively regulates plant basal and systemic acquired resistance (SAR). Activates MPK3 and MPK6 in vitro. The protein is Mitogen-activated protein kinase kinase 7 (MKK7) of Arabidopsis thaliana (Mouse-ear cress).